The chain runs to 444 residues: 23S rRNA (uracil(1939)-C(5))-methyltransferase RlmD (444 aa).

One can recognise a TRAM domain in the interval 5–64; it reads KPKLNLTSQTARIVNLSHDGRGIARINGKATFIQGALPGEVVEFQYTRVKKDFDEGKLLS. Residues cysteine 77, cysteine 83, cysteine 86, and cysteine 166 each coordinate [4Fe-4S] cluster. S-adenosyl-L-methionine is bound by residues glutamine 276, phenylalanine 305, asparagine 310, glutamate 326, asparagine 353, and aspartate 374. Catalysis depends on cysteine 400, which acts as the Nucleophile.

Belongs to the class I-like SAM-binding methyltransferase superfamily. RNA M5U methyltransferase family. RlmD subfamily.

The enzyme catalyses uridine(1939) in 23S rRNA + S-adenosyl-L-methionine = 5-methyluridine(1939) in 23S rRNA + S-adenosyl-L-homocysteine + H(+). In terms of biological role, catalyzes the formation of 5-methyl-uridine at position 1939 (m5U1939) in 23S rRNA. This chain is 23S rRNA (uracil(1939)-C(5))-methyltransferase RlmD, found in Legionella pneumophila (strain Lens).